Consider the following 73-residue polypeptide: Large ribosomal subunit protein bL31 (73 aa).

Zn(2+) is bound by residues Cys-16, Cys-18, Cys-38, and Cys-41.

This sequence belongs to the bacterial ribosomal protein bL31 family. Type A subfamily. In terms of assembly, part of the 50S ribosomal subunit. Zn(2+) serves as cofactor.

Binds the 23S rRNA. This Vibrio vulnificus (strain CMCP6) protein is Large ribosomal subunit protein bL31.